The chain runs to 312 residues: Acetaldehyde dehydrogenase (312 aa).

Residue 12–15 coordinates NAD(+); sequence SGNV. The active-site Acyl-thioester intermediate is cysteine 132. Residues 163 to 171 and asparagine 290 contribute to the NAD(+) site; that span reads SAGPGTRAN.

The protein belongs to the acetaldehyde dehydrogenase family.

It carries out the reaction acetaldehyde + NAD(+) + CoA = acetyl-CoA + NADH + H(+). This Pseudomonas putida (Arthrobacter siderocapsulatus) protein is Acetaldehyde dehydrogenase (cbzQ).